A 147-amino-acid chain; its full sequence is uncharacterized protein (147 aa).

Positions 1-37 are disordered; sequence MVALFKSSLGRPEQHQTPQIRISPASSNVEHSEKQPR. Positions 15 to 29 are enriched in polar residues; the sequence is HQTPQIRISPASSNV. Residues 71-147 form the Cytochrome b5 heme-binding domain; it reads PIPVTKEELA…LKTSFVGFLV (77 aa). His-106 and His-129 together coordinate heme.

This sequence belongs to the cytochrome b5 family.

This is an uncharacterized protein from Schizosaccharomyces pombe (strain 972 / ATCC 24843) (Fission yeast).